A 486-amino-acid chain; its full sequence is UDP-N-acetylmuramate--L-alanine ligase (486 aa).

Position 129–135 (129–135 (GTHGKTT)) interacts with ATP.

This sequence belongs to the MurCDEF family.

Its subcellular location is the cytoplasm. It carries out the reaction UDP-N-acetyl-alpha-D-muramate + L-alanine + ATP = UDP-N-acetyl-alpha-D-muramoyl-L-alanine + ADP + phosphate + H(+). The protein operates within cell wall biogenesis; peptidoglycan biosynthesis. Its function is as follows. Cell wall formation. This Vibrio cholerae serotype O1 (strain ATCC 39315 / El Tor Inaba N16961) protein is UDP-N-acetylmuramate--L-alanine ligase.